Reading from the N-terminus, the 114-residue chain is Endoribonuclease MazF2 (114 aa).

Belongs to the PemK/MazF family. Probably forms a complex with cognate antitoxin MazE2.

Toxic component of a type II toxin-antitoxin (TA) system. Acts as an endoribonuclease on single-strand RNA, cleaving between the second and third bases in the sequences CUCCU and UUCCU. Neutralized by coexpression with cognate antitoxin MazE2. The chain is Endoribonuclease MazF2 (mazF2) from Mycobacterium bovis (strain ATCC BAA-935 / AF2122/97).